The following is a 276-amino-acid chain: NAD kinase (276 aa).

Asp66 (proton acceptor) is an active-site residue. NAD(+)-binding positions include 66–67 (DG), 139–140 (ND), Asp168, 179–184 (TAYNIS), and Gln234.

It belongs to the NAD kinase family. A divalent metal cation is required as a cofactor.

Its subcellular location is the cytoplasm. It catalyses the reaction NAD(+) + ATP = ADP + NADP(+) + H(+). In terms of biological role, involved in the regulation of the intracellular balance of NAD and NADP, and is a key enzyme in the biosynthesis of NADP. Catalyzes specifically the phosphorylation on 2'-hydroxyl of the adenosine moiety of NAD to yield NADP. This chain is NAD kinase, found in Campylobacter lari (strain RM2100 / D67 / ATCC BAA-1060).